The chain runs to 62 residues: Alpha-conotoxin ViIA (62 aa).

The N-terminal stretch at 1–18 (MGMRMMFVVFLLVVFASS) is a signal peptide. A propeptide spanning residues 19–45 (VTLDRASYGRYASPVDRASALIAQAIL) is cleaved from the precursor. 2 disulfide bridges follow: C48/C54 and C49/C61.

This sequence belongs to the conotoxin A superfamily. In terms of processing, the toxin is inactive on the alpha-3-beta-2 nAChR when the disulfide bond connectivity is C1-C4 and C2-C3 (ViIA-I) (IC(50)&gt;10000 nM). Expressed by the venom duct.

It is found in the secreted. Functionally, alpha-conotoxins act on postsynaptic membranes, they bind to the nicotinic acetylcholine receptors (nAChR) and thus inhibit them. This toxin selectively inhibits nicotinic acetylcholine receptor (nAChR) alpha-3-beta-2 subtype (IC(50)=845.5 nM). This Conus virgo (Virgin cone) protein is Alpha-conotoxin ViIA.